The primary structure comprises 296 residues: Porphobilinogen deaminase (296 aa).

The residue at position 235 (C235) is an S-(dipyrrolylmethanemethyl)cysteine.

It belongs to the HMBS family. As to quaternary structure, monomer. Dipyrromethane serves as cofactor.

It carries out the reaction 4 porphobilinogen + H2O = hydroxymethylbilane + 4 NH4(+). Its pathway is porphyrin-containing compound metabolism; protoporphyrin-IX biosynthesis; coproporphyrinogen-III from 5-aminolevulinate: step 2/4. In terms of biological role, tetrapolymerization of the monopyrrole PBG into the hydroxymethylbilane pre-uroporphyrinogen in several discrete steps. The sequence is that of Porphobilinogen deaminase from Alkaliphilus oremlandii (strain OhILAs) (Clostridium oremlandii (strain OhILAs)).